Consider the following 229-residue polypeptide: Enolase-phosphatase E1 (229 aa).

The interval 206–229 (DRDPASHHPQVQRFDDIHPEQIPA) is disordered. The segment covering 218 to 229 (RFDDIHPEQIPA) has biased composition (basic and acidic residues).

It belongs to the HAD-like hydrolase superfamily. MasA/MtnC family. Monomer. Mg(2+) serves as cofactor.

It carries out the reaction 5-methylsulfanyl-2,3-dioxopentyl phosphate + H2O = 1,2-dihydroxy-5-(methylsulfanyl)pent-1-en-3-one + phosphate. Its pathway is amino-acid biosynthesis; L-methionine biosynthesis via salvage pathway; L-methionine from S-methyl-5-thio-alpha-D-ribose 1-phosphate: step 3/6. It participates in amino-acid biosynthesis; L-methionine biosynthesis via salvage pathway; L-methionine from S-methyl-5-thio-alpha-D-ribose 1-phosphate: step 4/6. Functionally, bifunctional enzyme that catalyzes the enolization of 2,3-diketo-5-methylthiopentyl-1-phosphate (DK-MTP-1-P) into the intermediate 2-hydroxy-3-keto-5-methylthiopentenyl-1-phosphate (HK-MTPenyl-1-P), which is then dephosphorylated to form the acireductone 1,2-dihydroxy-3-keto-5-methylthiopentene (DHK-MTPene). The chain is Enolase-phosphatase E1 from Klebsiella oxytoca.